Reading from the N-terminus, the 212-residue chain is Putative DNA-binding protein At1g48610 (212 aa).

Residues 1–130 (MAKTALTPPA…GRPKKDDVAA (130 aa)) form a disordered region. Residues 27-44 (NKPQTDATGVSATDTASQ) are compositionally biased toward polar residues. 3 consecutive DNA-binding regions (a.T hook) follow at residues 45-56 (KRGRGRPPKAKS), 70-79 (TKPSGRPKRN), and 94-98 (KKRGR). Residues 57-72 (DSSQIGAVSAKASTKP) are compositionally biased toward polar residues. Low complexity predominate over residues 103-113 (TVTAAVVTTAT). The segment at residues 118–127 (RKRGRPKKDD) is a DNA-binding region (a.T hook 4). A coiled-coil region spans residues 176–210 (DLKKRTALLQKKVKEAAAKLKQAVTAIDEVQKLAD).

Its subcellular location is the nucleus. Functionally, may bind DNA. The sequence is that of Putative DNA-binding protein At1g48610 from Arabidopsis thaliana (Mouse-ear cress).